The following is a 443-amino-acid chain: Ribulose bisphosphate carboxylase large chain (443 aa).

Positions 89 and 139 each coordinate substrate. Lysine 141 acts as the Proton acceptor in catalysis. Lysine 143 contributes to the substrate binding site. Residues lysine 167, aspartate 169, and glutamate 170 each contribute to the Mg(2+) site. Lysine 167 carries the post-translational modification N6-carboxylysine. The active-site Proton acceptor is histidine 260. Substrate contacts are provided by arginine 261, histidine 293, and serine 345.

It belongs to the RuBisCO large chain family. Type I subfamily. As to quaternary structure, heterohexadecamer of 8 large chains and 8 small chains; disulfide-linked. The disulfide link is formed within the large subunit homodimers. Mg(2+) is required as a cofactor. In terms of processing, the disulfide bond which can form in the large chain dimeric partners within the hexadecamer appears to be associated with oxidative stress and protein turnover.

It localises to the plastid. It is found in the chloroplast. It carries out the reaction 2 (2R)-3-phosphoglycerate + 2 H(+) = D-ribulose 1,5-bisphosphate + CO2 + H2O. It catalyses the reaction D-ribulose 1,5-bisphosphate + O2 = 2-phosphoglycolate + (2R)-3-phosphoglycerate + 2 H(+). RuBisCO catalyzes two reactions: the carboxylation of D-ribulose 1,5-bisphosphate, the primary event in carbon dioxide fixation, as well as the oxidative fragmentation of the pentose substrate in the photorespiration process. Both reactions occur simultaneously and in competition at the same active site. The polypeptide is Ribulose bisphosphate carboxylase large chain (Villarsia calthifolia (Marsh flower)).